The following is a 319-amino-acid chain: Quinolinate synthase (319 aa).

The iminosuccinate site is built by H34 and S51. C96 contributes to the [4Fe-4S] cluster binding site. Iminosuccinate-binding positions include 122–124 (YIN) and S139. C182 serves as a coordination point for [4Fe-4S] cluster. Residues 208-210 (HPE) and T225 each bind iminosuccinate. A [4Fe-4S] cluster-binding site is contributed by C276.

It belongs to the quinolinate synthase family. Type 2 subfamily. [4Fe-4S] cluster serves as cofactor.

It localises to the cytoplasm. It catalyses the reaction iminosuccinate + dihydroxyacetone phosphate = quinolinate + phosphate + 2 H2O + H(+). It functions in the pathway cofactor biosynthesis; NAD(+) biosynthesis; quinolinate from iminoaspartate: step 1/1. Functionally, catalyzes the condensation of iminoaspartate with dihydroxyacetone phosphate to form quinolinate. In Thermosynechococcus vestitus (strain NIES-2133 / IAM M-273 / BP-1), this protein is Quinolinate synthase.